The primary structure comprises 492 residues: N-succinylglutamate 5-semialdehyde dehydrogenase (492 aa).

220-225 (GSASTG) lines the NAD(+) pocket. Catalysis depends on residues glutamate 243 and cysteine 277.

It belongs to the aldehyde dehydrogenase family. AstD subfamily.

It catalyses the reaction N-succinyl-L-glutamate 5-semialdehyde + NAD(+) + H2O = N-succinyl-L-glutamate + NADH + 2 H(+). Its pathway is amino-acid degradation; L-arginine degradation via AST pathway; L-glutamate and succinate from L-arginine: step 4/5. Catalyzes the NAD-dependent reduction of succinylglutamate semialdehyde into succinylglutamate. The protein is N-succinylglutamate 5-semialdehyde dehydrogenase of Salmonella gallinarum (strain 287/91 / NCTC 13346).